A 225-amino-acid polypeptide reads, in one-letter code: Pyridoxine/pyridoxamine 5'-phosphate oxidase (225 aa).

Residues 21–24 (RKSY) and Lys-79 contribute to the substrate site. Residues 74-79 (RVVLIK), 89-90 (YT), Arg-95, and Lys-96 contribute to the FMN site. Residues Tyr-136, Arg-140, and Ser-144 each coordinate substrate. Residues 153–154 (QS) and Trp-197 each bind FMN. Residue 203 to 205 (RLH) coordinates substrate. Residue Arg-207 coordinates FMN.

The protein belongs to the pyridoxamine 5'-phosphate oxidase family. As to quaternary structure, homodimer. It depends on FMN as a cofactor.

It carries out the reaction pyridoxamine 5'-phosphate + O2 + H2O = pyridoxal 5'-phosphate + H2O2 + NH4(+). The catalysed reaction is pyridoxine 5'-phosphate + O2 = pyridoxal 5'-phosphate + H2O2. The protein operates within cofactor metabolism; pyridoxal 5'-phosphate salvage; pyridoxal 5'-phosphate from pyridoxamine 5'-phosphate: step 1/1. It functions in the pathway cofactor metabolism; pyridoxal 5'-phosphate salvage; pyridoxal 5'-phosphate from pyridoxine 5'-phosphate: step 1/1. Catalyzes the oxidation of either pyridoxine 5'-phosphate (PNP) or pyridoxamine 5'-phosphate (PMP) into pyridoxal 5'-phosphate (PLP). The protein is Pyridoxine/pyridoxamine 5'-phosphate oxidase of Paracidovorax citrulli (strain AAC00-1) (Acidovorax citrulli).